The chain runs to 382 residues: Ribosomal RNA large subunit methyltransferase G (382 aa).

It belongs to the methyltransferase superfamily. RlmG family.

The protein localises to the cytoplasm. It carries out the reaction guanosine(1835) in 23S rRNA + S-adenosyl-L-methionine = N(2)-methylguanosine(1835) in 23S rRNA + S-adenosyl-L-homocysteine + H(+). Specifically methylates the guanine in position 1835 (m2G1835) of 23S rRNA. This is Ribosomal RNA large subunit methyltransferase G from Aliivibrio salmonicida (strain LFI1238) (Vibrio salmonicida (strain LFI1238)).